A 276-amino-acid chain; its full sequence is Type 2 phosphatidylinositol 4,5-bisphosphate 4-phosphatase (276 aa).

Positions 1 to 10 (MAADGIDERS) are enriched in basic and acidic residues. Residues 1-27 (MAADGIDERSPLISPSSGNVTPTAPPY) form a disordered region. The span at 13–27 (ISPSSGNVTPTAPPY) shows a compositional bias: polar residues. Cys-106 is a catalytic residue. Residues 106–112 (CKDISRR) carry the CX5R motif motif. Helical transmembrane passes span 211–231 (CCTYITMGMICIFIGVGLTVG) and 246–266 (WAVAYLVGLVCLIRACYWGAI).

The protein localises to the late endosome membrane. It is found in the lysosome membrane. It catalyses the reaction a 1,2-diacyl-sn-glycero-3-phospho-(1D-myo-inositol-4,5-bisphosphate) + H2O = a 1,2-diacyl-sn-glycero-3-phospho-(1D-myo-inositol-5-phosphate) + phosphate. Functionally, catalyzes the hydrolysis of phosphatidylinositol-4,5-bisphosphate (PtdIns-4,5-P2) to phosphatidylinositol-4-phosphate (PtdIns-4-P). The polypeptide is Type 2 phosphatidylinositol 4,5-bisphosphate 4-phosphatase (pip4p2) (Xenopus tropicalis (Western clawed frog)).